We begin with the raw amino-acid sequence, 232 residues long: Thiamine import ATP-binding protein ThiQ (232 aa).

The region spanning 2 to 230 (LKLTDITWLY…KASASALLGI (229 aa)) is the ABC transporter domain. 32-39 (GPSGAGKS) provides a ligand contact to ATP.

It belongs to the ABC transporter superfamily. Thiamine importer (TC 3.A.1.19.1) family. In terms of assembly, the complex is composed of two ATP-binding proteins (ThiQ), two transmembrane proteins (ThiP) and a solute-binding protein (ThiB).

It localises to the cell inner membrane. The enzyme catalyses thiamine(out) + ATP + H2O = thiamine(in) + ADP + phosphate + H(+). In terms of biological role, part of the ABC transporter complex ThiBPQ involved in thiamine import. Responsible for energy coupling to the transport system. This chain is Thiamine import ATP-binding protein ThiQ, found in Escherichia coli O6:H1 (strain CFT073 / ATCC 700928 / UPEC).